A 496-amino-acid polypeptide reads, in one-letter code: MADESETAVKLPAPSLPLMMEGNGNGHEHCSDCENEEDNSHNRSGLSPANDTGAKKKKKKQKKKKEKGSDMESTQDQPVKMTSLPAERIQEIQKAIELFSVGQGPAKTMEEASKRSYQFWDTQPVPKLGEVVNTHGPVEPDKDNIRQEPYTLPQGFTWDALDLGDRGVLKELYTLLNENYVEDDDNMFRFDYSPEFLLWALRPPGWLPQWHCGVRVVSSRKLVGFISAIPANIHIYDTEKKMVEINFLCVHKKLRSKRVAPVLIREITRRVHLEGIFQAVYTAGVVLPKPVGTCRYWHRSLNPRKLIEVKFSHLSRNMTMQRTMKLYRLPETPKTAGLRPMEKKDIPVVHQLLSRYLKQFHLTPVMNQEEVEHWFYPQENIIDTFVVENANGEVTDFLSFYTLPSTIMNHPTHKSLKAAYSFYNVHTQTPLLDLMSDALVLAKMKGFDVFNALDLMENKTFLEKLKFGIGDGNLQYYLYNWKCPSMGAEKVGLVLQ.

A disordered region spans residues 1-82 (MADESETAVK…STQDQPVKMT (82 aa)). 2 positions are modified to phosphoserine: Ser-31 and Ser-47. A compositionally biased stretch (basic residues) spans 55-66 (KKKKKKQKKKKE). Phosphoserine is present on Ser-83. Tetradecanoyl-CoA is bound by residues Gln-118, Phe-119, Trp-120, Phe-247, Leu-248, Cys-249, Val-250, Ser-256, Arg-258, Val-259, and Ala-260.

The protein belongs to the NMT family. In terms of tissue distribution, ubiquitous.

It is found in the cytoplasm. Its subcellular location is the cytosol. The protein resides in the membrane. The enzyme catalyses N-terminal glycyl-[protein] + tetradecanoyl-CoA = N-tetradecanoylglycyl-[protein] + CoA + H(+). It carries out the reaction N-terminal glycyl-L-lysyl-[protein] + tetradecanoyl-CoA = N-terminal glycyl-(N(6)-tetradecanoyl)-L-lysyl-[protein] + CoA + H(+). Functionally, adds a myristoyl group to the N-terminal glycine residue of certain cellular and viral proteins. Also able to mediate N-terminal lysine myristoylation of proteins: catalyzes myristoylation of ARF6 on both 'Gly-2' and 'Lys-3'. Lysine myristoylation is required to maintain ARF6 on membranes during the GTPase cycle. Required for normal embryogenesis. This Mus musculus (Mouse) protein is Glycylpeptide N-tetradecanoyltransferase 1.